The following is a 601-amino-acid chain: Chaperone protein DnaK (601 aa).

Threonine 175 carries the phosphothreonine; by autocatalysis modification. Positions 570–601 are disordered; that stretch reads FAQKAASKETSKNEQNEDGSIDAEIKEEDPKA. Positions 575–584 are enriched in basic and acidic residues; sequence ASKETSKNEQ. Residues 585–601 show a composition bias toward acidic residues; the sequence is NEDGSIDAEIKEEDPKA.

It belongs to the heat shock protein 70 family.

Functionally, acts as a chaperone. The polypeptide is Chaperone protein DnaK (Mycoplasma mobile (strain ATCC 43663 / 163K / NCTC 11711) (Mesomycoplasma mobile)).